We begin with the raw amino-acid sequence, 442 residues long: Coiled-coil domain-containing protein 91 (442 aa).

Residues 1-16 (MDDDDFGGFEAAETFD) form a GGA1-binding motif region. The segment at 1 to 27 (MDDDDFGGFEAAETFDGEQGGNQAVSP) is disordered. Phosphoserine occurs at positions 43 and 46. 2 disordered regions span residues 48 to 80 (ELILDHDHSSPSTGHLPPDAVISSADDTHADSS) and 114 to 134 (HGALALEDEPEGPGVHVSNSQ). Coiled coils occupy residues 130 to 210 (VSNS…GHEA), 253 to 318 (HAQH…MKDV), and 346 to 408 (ARDQ…RRLD). A homodimerization region spans residues 211–414 (LSIIVDEYKA…RRLDQVTRQR (204 aa)).

In terms of assembly, homodimer. Interacts with GGA1, GGA2 and AP1G1.

The protein localises to the membrane. Its subcellular location is the golgi apparatus. It is found in the trans-Golgi network membrane. It localises to the trans-Golgi network. Functionally, involved in the regulation of membrane traffic through the trans-Golgi network (TGN). Functions in close cooperation with the GGAs in the sorting of hydrolases to lysosomes. This Mus musculus (Mouse) protein is Coiled-coil domain-containing protein 91 (Ccdc91).